Here is a 147-residue protein sequence, read N- to C-terminus: RxLR effector protein Avr3a (147 aa).

The signal sequence occupies residues 1–21 (MRLAIMLSATAVAINFATCSA). Positions 44–59 (RLLRKNEENEETSEER) match the RxLR-dEER motif. N6-acetyllysine is present on Lys-48. An effector domain region spans residues 77–147 (ALTKRADAKK…YMMHLGLTGY (71 aa)).

Belongs to the RxLR effector family. Forms homodimers via the RxLR-dEER motif. Interacts with host E3 ligase CMPG1. Interacts with host DRP2. Proteolytically cleaved. The cleavage site directly after the RxLR sequence and the high conservation among other effector proteins suggest that the RxLR motif might play a crucial role in the intracellular processing before secretion. Post-translationally, glycosylated. In terms of processing, N-acetylated at Lys-48 after cleavage.

The protein resides in the secreted. It is found in the host cytoplasm. The protein localises to the host endosome. Functionally, multifunctional effector that can suppress host BAK1/SERK3-mediated immunity through at least two different pathways. Manipulates plant immunity by targeting and stabilizing host E3 ligase CMPG1. Preventing the normal 26S proteasome-dependent degradation of potato CMPG1, and thus potentially of its protein substrates in the host cell, further abolishes host cell death during the biotrophic phase of infection. Also associates with the dynamin-related protein 2 (DRP2), a plant GTPase involved in immune receptor-mediated endocytosis. The Avr3A(KI) form is recognized by R3a which triggers R3a-mediated hypersensitivity and suppresses INF1-induced cell death. In Phytophthora infestans (Potato late blight agent), this protein is RxLR effector protein Avr3a.